The sequence spans 475 residues: Aspartyl/glutamyl-tRNA(Asn/Gln) amidotransferase subunit B (475 aa).

The protein belongs to the GatB/GatE family. GatB subfamily. As to quaternary structure, heterotrimer of A, B and C subunits.

The enzyme catalyses L-glutamyl-tRNA(Gln) + L-glutamine + ATP + H2O = L-glutaminyl-tRNA(Gln) + L-glutamate + ADP + phosphate + H(+). It catalyses the reaction L-aspartyl-tRNA(Asn) + L-glutamine + ATP + H2O = L-asparaginyl-tRNA(Asn) + L-glutamate + ADP + phosphate + 2 H(+). Its function is as follows. Allows the formation of correctly charged Asn-tRNA(Asn) or Gln-tRNA(Gln) through the transamidation of misacylated Asp-tRNA(Asn) or Glu-tRNA(Gln) in organisms which lack either or both of asparaginyl-tRNA or glutaminyl-tRNA synthetases. The reaction takes place in the presence of glutamine and ATP through an activated phospho-Asp-tRNA(Asn) or phospho-Glu-tRNA(Gln). The protein is Aspartyl/glutamyl-tRNA(Asn/Gln) amidotransferase subunit B of Trichlorobacter lovleyi (strain ATCC BAA-1151 / DSM 17278 / SZ) (Geobacter lovleyi).